The chain runs to 258 residues: GTP cyclohydrolase FolE2 (258 aa).

The protein belongs to the GTP cyclohydrolase IV family.

It catalyses the reaction GTP + H2O = 7,8-dihydroneopterin 3'-triphosphate + formate + H(+). It participates in cofactor biosynthesis; 7,8-dihydroneopterin triphosphate biosynthesis; 7,8-dihydroneopterin triphosphate from GTP: step 1/1. Its function is as follows. Converts GTP to 7,8-dihydroneopterin triphosphate. In Lawsonia intracellularis (strain PHE/MN1-00), this protein is GTP cyclohydrolase FolE2.